Reading from the N-terminus, the 378-residue chain is Quinolinate synthase (378 aa).

The iminosuccinate site is built by H59 and S80. C125 is a [4Fe-4S] cluster binding site. Residues 151–153 (YAN) and S168 contribute to the iminosuccinate site. C212 contributes to the [4Fe-4S] cluster binding site. Iminosuccinate contacts are provided by residues 238-240 (HPE) and T255. C309 provides a ligand contact to [4Fe-4S] cluster.

Belongs to the quinolinate synthase family. Type 1 subfamily. Requires [4Fe-4S] cluster as cofactor.

The protein localises to the cytoplasm. The catalysed reaction is iminosuccinate + dihydroxyacetone phosphate = quinolinate + phosphate + 2 H2O + H(+). Its pathway is cofactor biosynthesis; NAD(+) biosynthesis; quinolinate from iminoaspartate: step 1/1. Functionally, catalyzes the condensation of iminoaspartate with dihydroxyacetone phosphate to form quinolinate. In Burkholderia pseudomallei (strain 668), this protein is Quinolinate synthase.